We begin with the raw amino-acid sequence, 114 residues long: MSKVLVEAKGMGLRSTPYKLNLVADLIRGKPVSVAVMYLKFCKKKSARYISKVLKSAIANAQANYSVDVDNLYIKEVLVGKSFSLRRIHARARGKACRVYKHYGNVIIKLFERV.

Belongs to the universal ribosomal protein uL22 family. As to quaternary structure, part of the 50S ribosomal subunit.

Functionally, this protein binds specifically to 23S rRNA; its binding is stimulated by other ribosomal proteins, e.g. L4, L17, and L20. It is important during the early stages of 50S assembly. It makes multiple contacts with different domains of the 23S rRNA in the assembled 50S subunit and ribosome. The globular domain of the protein is located near the polypeptide exit tunnel on the outside of the subunit, while an extended beta-hairpin is found that lines the wall of the exit tunnel in the center of the 70S ribosome. In Ehrlichia ruminantium (strain Gardel), this protein is Large ribosomal subunit protein uL22.